The following is a 364-amino-acid chain: Probable dual-specificity RNA methyltransferase RlmN (364 aa).

The Proton acceptor role is filled by Glu106. Positions 112–351 constitute a Radical SAM core domain; sequence YPHRNTVCIS…CTVRDTRGRE (240 aa). A disulfide bridge links Cys119 with Cys356. Cys126, Cys130, and Cys133 together coordinate [4Fe-4S] cluster. S-adenosyl-L-methionine is bound by residues 177–178, Ser211, 234–236, and Asn313; these read GE and SLH. Cys356 serves as the catalytic S-methylcysteine intermediate.

It belongs to the radical SAM superfamily. RlmN family. It depends on [4Fe-4S] cluster as a cofactor.

The protein localises to the cytoplasm. It carries out the reaction adenosine(2503) in 23S rRNA + 2 reduced [2Fe-2S]-[ferredoxin] + 2 S-adenosyl-L-methionine = 2-methyladenosine(2503) in 23S rRNA + 5'-deoxyadenosine + L-methionine + 2 oxidized [2Fe-2S]-[ferredoxin] + S-adenosyl-L-homocysteine. The enzyme catalyses adenosine(37) in tRNA + 2 reduced [2Fe-2S]-[ferredoxin] + 2 S-adenosyl-L-methionine = 2-methyladenosine(37) in tRNA + 5'-deoxyadenosine + L-methionine + 2 oxidized [2Fe-2S]-[ferredoxin] + S-adenosyl-L-homocysteine. In terms of biological role, specifically methylates position 2 of adenine 2503 in 23S rRNA and position 2 of adenine 37 in tRNAs. This Mycolicibacterium paratuberculosis (strain ATCC BAA-968 / K-10) (Mycobacterium paratuberculosis) protein is Probable dual-specificity RNA methyltransferase RlmN.